Here is a 450-residue protein sequence, read N- to C-terminus: Serine--tRNA ligase, cytoplasmic (450 aa).

L-serine is bound at residue 238–240; sequence TSE. ATP is bound by residues 271–273 and Val-287; that span reads RRE. Glu-294 provides a ligand contact to L-serine. 358 to 361 lines the ATP pocket; it reads ELVS. Thr-396 contributes to the L-serine binding site.

It belongs to the class-II aminoacyl-tRNA synthetase family. Type-1 seryl-tRNA synthetase subfamily. Homodimer. The tRNA molecule binds across the dimer.

It is found in the cytoplasm. Its subcellular location is the cytosol. It catalyses the reaction tRNA(Ser) + L-serine + ATP = L-seryl-tRNA(Ser) + AMP + diphosphate + H(+). Functionally, catalyzes the attachment of serine to tRNA(Ser) in a two-step reaction: serine is first activated by ATP to form Ser-AMP and then transferred to the acceptor end of tRNA(Ser). The sequence is that of Serine--tRNA ligase, cytoplasmic from Schizosaccharomyces pombe (strain 972 / ATCC 24843) (Fission yeast).